The following is a 473-amino-acid chain: G2/mitotic-specific cyclin-1 (473 aa).

The span at 1–12 shows a compositional bias: polar residues; it reads MGSRNIVQQQNR. 2 disordered regions span residues 1 to 23 and 134 to 155; these read MGSR…AMKQ and KEKP…APTL. Positions 134-147 are enriched in basic and acidic residues; sequence KEKPIEKEKAAEKS.

Belongs to the cyclin family. Cyclin AB subfamily. In terms of assembly, interacts with the CDC2 and CDK2 protein kinases to form a serine/threonine kinase holoenzyme complex. The cyclin subunit imparts substrate specificity to the complex.

Essential for the control of the cell cycle at the G2/M (mitosis) transition. G2/M cyclins accumulate steadily during G2 and are abruptly destroyed at mitosis. The protein is G2/mitotic-specific cyclin-1 of Antirrhinum majus (Garden snapdragon).